Here is a 467-residue protein sequence, read N- to C-terminus: Dihydrolipoyl dehydrogenase (467 aa).

Residues 33–41, Lys-50, and Gly-113 each bind FAD; that span reads EPKYWGGIC. A disulfide bridge links Cys-41 with Cys-46. NAD(+)-binding positions include 181–185, Glu-204, and 269–272; these read GAGAI and AIGF. Residues Asp-312 and Ala-320 each coordinate FAD. His-446 acts as the Proton acceptor in catalysis.

It belongs to the class-I pyridine nucleotide-disulfide oxidoreductase family. Homodimer. Part of the PDH complex, consisting of multiple copies of AceE (E1), DlaT (E2) and Lpd (E3), and of the BCKADH complex, consisting of multiple copies of BkdA/BkdB (E1), BkdC (E2) and Lpd (E3). Requires FAD as cofactor.

Its subcellular location is the cytoplasm. The enzyme catalyses N(6)-[(R)-dihydrolipoyl]-L-lysyl-[protein] + NAD(+) = N(6)-[(R)-lipoyl]-L-lysyl-[protein] + NADH + H(+). Lipoamide dehydrogenase is a component of the alpha-ketoacid dehydrogenase complexes. Catalyzes the reoxidation of dihydrolipoyl groups which are covalently attached to the lipoate acyltransferase components (E2) of the complexes. The sequence is that of Dihydrolipoyl dehydrogenase (lpd) from Mycobacterium leprae (strain TN).